A 350-amino-acid chain; its full sequence is N-acetyl-gamma-glutamyl-phosphate reductase (350 aa).

C153 is a catalytic residue.

It belongs to the NAGSA dehydrogenase family. Type 1 subfamily.

It localises to the cytoplasm. It carries out the reaction N-acetyl-L-glutamate 5-semialdehyde + phosphate + NADP(+) = N-acetyl-L-glutamyl 5-phosphate + NADPH + H(+). It participates in amino-acid biosynthesis; L-arginine biosynthesis; N(2)-acetyl-L-ornithine from L-glutamate: step 3/4. Its function is as follows. Catalyzes the NADPH-dependent reduction of N-acetyl-5-glutamyl phosphate to yield N-acetyl-L-glutamate 5-semialdehyde. This is N-acetyl-gamma-glutamyl-phosphate reductase from Gloeobacter violaceus (strain ATCC 29082 / PCC 7421).